The following is a 480-amino-acid chain: Glutamate--tRNA ligase (480 aa).

The short motif at 9–19 (PSPTGDPHVGT) is the 'HIGH' region element. The short motif at 253-257 (KISKR) is the 'KMSKS' region element. An ATP-binding site is contributed by Lys-256.

It belongs to the class-I aminoacyl-tRNA synthetase family. Glutamate--tRNA ligase type 1 subfamily. As to quaternary structure, monomer.

Its subcellular location is the cytoplasm. It carries out the reaction tRNA(Glu) + L-glutamate + ATP = L-glutamyl-tRNA(Glu) + AMP + diphosphate. Its function is as follows. Catalyzes the attachment of glutamate to tRNA(Glu) in a two-step reaction: glutamate is first activated by ATP to form Glu-AMP and then transferred to the acceptor end of tRNA(Glu). This chain is Glutamate--tRNA ligase, found in Deinococcus geothermalis (strain DSM 11300 / CIP 105573 / AG-3a).